A 421-amino-acid polypeptide reads, in one-letter code: UDP-N-acetylglucosamine 1-carboxyvinyltransferase (421 aa).

22–23 (KN) contributes to the phosphoenolpyruvate binding site. Arginine 93 contributes to the UDP-N-acetyl-alpha-D-glucosamine binding site. The active-site Proton donor is cysteine 117. At cysteine 117 the chain carries 2-(S-cysteinyl)pyruvic acid O-phosphothioketal. Residues 122–126 (RPVDL), aspartate 308, and leucine 330 contribute to the UDP-N-acetyl-alpha-D-glucosamine site.

This sequence belongs to the EPSP synthase family. MurA subfamily.

Its subcellular location is the cytoplasm. It carries out the reaction phosphoenolpyruvate + UDP-N-acetyl-alpha-D-glucosamine = UDP-N-acetyl-3-O-(1-carboxyvinyl)-alpha-D-glucosamine + phosphate. It participates in cell wall biogenesis; peptidoglycan biosynthesis. Its function is as follows. Cell wall formation. Adds enolpyruvyl to UDP-N-acetylglucosamine. This Helicobacter hepaticus (strain ATCC 51449 / 3B1) protein is UDP-N-acetylglucosamine 1-carboxyvinyltransferase.